Consider the following 368-residue polypeptide: Isopentenyl-diphosphate delta-isomerase (368 aa).

7-8 (RK) contributes to the substrate binding site. FMN contacts are provided by residues threonine 65, 66-68 (GMT), serine 96, and asparagine 125. Substrate is bound at residue 96–98 (SQR). Glutamine 160 provides a ligand contact to substrate. A Mg(2+)-binding site is contributed by glutamate 161. Residues lysine 193, serine 218, threonine 223, 275–277 (GIR), and 296–297 (AL) contribute to the FMN site.

This sequence belongs to the IPP isomerase type 2 family. Homooctamer. Dimer of tetramers. The cofactor is FMN. Requires NADPH as cofactor. Mg(2+) is required as a cofactor.

The protein localises to the cytoplasm. The catalysed reaction is isopentenyl diphosphate = dimethylallyl diphosphate. In terms of biological role, involved in the biosynthesis of isoprenoids. Catalyzes the 1,3-allylic rearrangement of the homoallylic substrate isopentenyl (IPP) to its allylic isomer, dimethylallyl diphosphate (DMAPP). In Saccharolobus islandicus (strain M.16.27) (Sulfolobus islandicus), this protein is Isopentenyl-diphosphate delta-isomerase.